A 419-amino-acid polypeptide reads, in one-letter code: AT-hook motif nuclear-localized protein 4 (419 aa).

3 disordered regions span residues 1–168, 301–337, and 382–419; these read MEER…SGGG, QQQQQQIKKQRRERLGIPTTTQASNISFGGSAEDPKA, and DLFSSLPGEDREEDEDDLEGEDDEEFGGHSESDTEVPS. The short motif at 78–86 is the Bipartite nuclear localization signal element; that stretch reads KKKRGRPRK. Residues 78 to 90 constitute a DNA-binding region (a.T hook); the sequence is KKKRGRPRKYNPD. The segment covering 101–112 has biased composition (polar residues); that stretch reads PISSSVPLTSEF. The span at 115 to 130 shows a compositional bias: basic residues; the sequence is RKRGRGRGRGRGRGRG. Residues 136-148 show a composition bias toward low complexity; the sequence is GSREPNNNNNDNN. Positions 174–314 constitute a PPC domain; that stretch reads VSPSFTPHVL…QQIKKQRRER (141 aa). The span at 318–328 shows a compositional bias: polar residues; the sequence is PTTTQASNISF. Positions 391-406 are enriched in acidic residues; it reads DREEDEDDLEGEDDEE.

Homodimer. Interacts with AHL3. In terms of tissue distribution, predominantly expressed in the stele of the root meristem with a specificity to the procambium.

Its subcellular location is the nucleus. Its function is as follows. Transcription factor that specifically binds AT-rich DNA sequences related to the nuclear matrix attachment regions (MARs). Acts redundantly with AHL3 to regulate the formation of tissue boundary between the xylem and procambium in the root meristem. Cell-to-cell movement of AHL4 from the procambium to the xylem is critical for its function in root vascular patterning. The sequence is that of AT-hook motif nuclear-localized protein 4 from Arabidopsis thaliana (Mouse-ear cress).